Reading from the N-terminus, the 275-residue chain is MKNTVLTFKQAKEEKRRLSMLTAYDYSMAKIIDESGVNGILIGDSLGMVIKGEDDTLAVTMDEIIYHTKAVKKGAKNALIVSDMPFLSYHVSIEQAVLNAGRLIKEGGANAVKLEGGANVAAQIKAIVDAQIPVMGHIGLTPQSVNAFGGFKVQGKSESAAKQLIDDAVLIEKAGAFSIVLEGIPEKVAELITNAVSIPTIGIGAGKYCDGQILVYQDMLGMFNDFVPKFVKQYANVGNVMREAISSYVKEVQAGDFPEEKHTFKIDENELKKLY.

Mg(2+) is bound by residues Asp-44 and Asp-83. 3-methyl-2-oxobutanoate-binding positions include 44-45 (DS), Asp-83, and Lys-113. A Mg(2+)-binding site is contributed by Glu-115. The Proton acceptor role is filled by Glu-182.

Belongs to the PanB family. As to quaternary structure, homodecamer; pentamer of dimers. The cofactor is Mg(2+).

It is found in the cytoplasm. It catalyses the reaction 3-methyl-2-oxobutanoate + (6R)-5,10-methylene-5,6,7,8-tetrahydrofolate + H2O = 2-dehydropantoate + (6S)-5,6,7,8-tetrahydrofolate. It functions in the pathway cofactor biosynthesis; (R)-pantothenate biosynthesis; (R)-pantoate from 3-methyl-2-oxobutanoate: step 1/2. In terms of biological role, catalyzes the reversible reaction in which hydroxymethyl group from 5,10-methylenetetrahydrofolate is transferred onto alpha-ketoisovalerate to form ketopantoate. The chain is 3-methyl-2-oxobutanoate hydroxymethyltransferase from Clostridium beijerinckii (strain ATCC 51743 / NCIMB 8052) (Clostridium acetobutylicum).